A 215-amino-acid chain; its full sequence is Small ribosomal subunit protein uS7 (215 aa).

Belongs to the universal ribosomal protein uS7 family. Part of the 30S ribosomal subunit.

In terms of biological role, one of the primary rRNA binding proteins, it binds directly to 16S rRNA where it nucleates assembly of the head domain of the 30S subunit. Is located at the subunit interface close to the decoding center. The sequence is that of Small ribosomal subunit protein uS7 from Pyrococcus abyssi (strain GE5 / Orsay).